A 943-amino-acid polypeptide reads, in one-letter code: Conidiophore development regulator abaA (943 aa).

Disordered stretches follow at residues 1-69 (MSSS…FNGG) and 111-133 (TSRQ…HQRG). Basic and acidic residues predominate over residues 29–43 (IDTRRSFHGDSRLPL). Residues 59–68 (PSSAHSSFNG) are compositionally biased toward polar residues. The TEA DNA-binding region spans 161-254 (QKDKGGVWRR…QVVKKFFEDL (94 aa)). Positions 537–555 (EHQRKKEKRSCGKKPDLER) are enriched in basic and acidic residues. Disordered stretches follow at residues 537 to 575 (EHQR…AAWT) and 809 to 901 (GAAG…HHPG). Positions 865-889 (DSWTAGSSAGGAPAATPTGPDWGPT) are enriched in low complexity.

The protein belongs to the TEC1 family.

The protein resides in the nucleus. In terms of biological role, brlA, abaA and wetA are pivotal regulators of conidiophore development and conidium maturation. They act individually and together to regulate their own expression and that of numerous other sporulation-specific genes. Binds to the sequence 5'-CATTCY-3', where Y is a pyrimidine, making both major- and minor-groove contacts. The chain is Conidiophore development regulator abaA from Hapsidospora chrysogena (Acremonium chrysogenum).